We begin with the raw amino-acid sequence, 152 residues long: uncharacterized protein (152 aa).

The signal sequence occupies residues 1–16 (MRKLLISLALAIPVFA). One can recognise a Cytochrome c domain in the interval 20-135 (NLLQKGYEVY…AVAYWLYHNY (116 aa)). 3 residues coordinate heme c: C33, C36, and H37.

This is an uncharacterized protein from Aquifex aeolicus (strain VF5).